Consider the following 278-residue polypeptide: Type II restriction enzyme NgoPII (278 aa).

It belongs to the NgoPII type II restriction endonuclease family.

The enzyme catalyses Endonucleolytic cleavage of DNA to give specific double-stranded fragments with terminal 5'-phosphates.. In terms of biological role, a P subtype restriction enzyme that recognizes the double-stranded sequence 5'-GGCC-3' and cleaves after G-2. In Neisseria gonorrhoeae, this protein is Type II restriction enzyme NgoPII (ngoPIIR).